The sequence spans 328 residues: Phosphate acyltransferase (328 aa).

It belongs to the PlsX family. As to quaternary structure, homodimer. Probably interacts with PlsY.

The protein localises to the cytoplasm. The enzyme catalyses a fatty acyl-[ACP] + phosphate = an acyl phosphate + holo-[ACP]. Its pathway is lipid metabolism; phospholipid metabolism. Its function is as follows. Catalyzes the reversible formation of acyl-phosphate (acyl-PO(4)) from acyl-[acyl-carrier-protein] (acyl-ACP). This enzyme utilizes acyl-ACP as fatty acyl donor, but not acyl-CoA. This is Phosphate acyltransferase from Mycoplasmoides gallisepticum (strain R(low / passage 15 / clone 2)) (Mycoplasma gallisepticum).